A 41-amino-acid chain; its full sequence is Photosystem I reaction center subunit IX (41 aa).

Residues tyrosine 7–isoleucine 27 traverse the membrane as a helical segment.

This sequence belongs to the PsaJ family.

It localises to the plastid. It is found in the chloroplast thylakoid membrane. In terms of biological role, may help in the organization of the PsaE and PsaF subunits. This is Photosystem I reaction center subunit IX from Stigeoclonium helveticum (Green alga).